The chain runs to 373 residues: ORC1-type DNA replication protein 2 (373 aa).

Residues 63–67 (TGKTS), Y205, and R217 each bind ATP.

This sequence belongs to the CDC6/cdc18 family.

Functionally, involved in regulation of DNA replication. This chain is ORC1-type DNA replication protein 2 (cdc6-2), found in Methanosarcina acetivorans (strain ATCC 35395 / DSM 2834 / JCM 12185 / C2A).